Consider the following 91-residue polypeptide: ATP synthase subunit c 2 (91 aa).

2 helical membrane passes run 4 to 24 (FSMC…GTGI) and 53 to 73 (IGLA…LIIL).

It belongs to the ATPase C chain family. In terms of assembly, F-type ATPases have 2 components, F(1) - the catalytic core - and F(0) - the membrane proton channel. F(1) has five subunits: alpha(3), beta(3), gamma(1), delta(1), epsilon(1). F(0) has three main subunits: a(1), b(2) and c(10-14). The alpha and beta chains form an alternating ring which encloses part of the gamma chain. F(1) is attached to F(0) by a central stalk formed by the gamma and epsilon chains, while a peripheral stalk is formed by the delta and b chains.

It is found in the cell inner membrane. Its function is as follows. F(1)F(0) ATP synthase produces ATP from ADP in the presence of a proton or sodium gradient. F-type ATPases consist of two structural domains, F(1) containing the extramembraneous catalytic core and F(0) containing the membrane proton channel, linked together by a central stalk and a peripheral stalk. During catalysis, ATP synthesis in the catalytic domain of F(1) is coupled via a rotary mechanism of the central stalk subunits to proton translocation. Functionally, key component of the F(0) channel; it plays a direct role in translocation across the membrane. A homomeric c-ring of between 10-14 subunits forms the central stalk rotor element with the F(1) delta and epsilon subunits. The sequence is that of ATP synthase subunit c 2 from Pelobacter propionicus (strain DSM 2379 / NBRC 103807 / OttBd1).